Here is a 467-residue protein sequence, read N- to C-terminus: tRNA-2-methylthio-N(6)-dimethylallyladenosine synthase (467 aa).

Residues 1 to 20 form a disordered region; that stretch reads MSDDTTQIEPAMAQETSPRA. In terms of domain architecture, MTTase N-terminal spans 23–143; it reads RKVFVKTYGC…LPNALARVRG (121 aa). Positions 32, 68, 106, 184, 188, and 191 each coordinate [4Fe-4S] cluster. Positions 170 to 402 constitute a Radical SAM core domain; the sequence is RKRGVSAFLT…QALLSAQQYA (233 aa). The TRAM domain occupies 405–467; the sequence is DSMIGRKMDV…TNSLIAQKLA (63 aa).

This sequence belongs to the methylthiotransferase family. MiaB subfamily. As to quaternary structure, monomer. The cofactor is [4Fe-4S] cluster.

The protein resides in the cytoplasm. It carries out the reaction N(6)-dimethylallyladenosine(37) in tRNA + (sulfur carrier)-SH + AH2 + 2 S-adenosyl-L-methionine = 2-methylsulfanyl-N(6)-dimethylallyladenosine(37) in tRNA + (sulfur carrier)-H + 5'-deoxyadenosine + L-methionine + A + S-adenosyl-L-homocysteine + 2 H(+). In terms of biological role, catalyzes the methylthiolation of N6-(dimethylallyl)adenosine (i(6)A), leading to the formation of 2-methylthio-N6-(dimethylallyl)adenosine (ms(2)i(6)A) at position 37 in tRNAs that read codons beginning with uridine. The polypeptide is tRNA-2-methylthio-N(6)-dimethylallyladenosine synthase (Brucella suis (strain ATCC 23445 / NCTC 10510)).